A 196-amino-acid polypeptide reads, in one-letter code: MAQLYFRYGTMNSGKSIEILKVAYNYEEQGKPVVLLTSRLDDRDEVGYISSRIGMRRKAYPIGNDTDIFDYIDDISPRPYCVLIDEAQFLTRANVYDLARIVDELDIPVMAFGLKNDFQNNLFEGSKYLLLLSDKIEEIKTICHYCSRKATMVLRMEDGEPVYEGVQVQIGGHESYISVCRKHWFNPPRERIVPLK.

ATP-binding positions include Gly-9–Ser-16 and Asp-85–Gln-88. The active-site Proton acceptor is the Glu-86. The Zn(2+) site is built by Cys-143, Cys-146, Cys-180, and His-183.

Belongs to the thymidine kinase family. As to quaternary structure, homotetramer.

It is found in the cytoplasm. It catalyses the reaction thymidine + ATP = dTMP + ADP + H(+). The sequence is that of Thymidine kinase from Streptococcus thermophilus (strain CNRZ 1066).